We begin with the raw amino-acid sequence, 743 residues long: Cytosolic endo-beta-N-acetylglucosaminidase (743 aa).

At methionine 1 the chain carries N-acetylmethionine. Low complexity predominate over residues 1-11 (MEAAAVTVTRS). The disordered stretch occupies residues 1-55 (MEAAAVTVTRSATRRRRRQLQGLAAPEAGTQEEQEDQEPRPRRRRPGRSIKDEEE). Serine 66 is modified (phosphoserine). The BRCT domain occupies 291 to 383 (RVFFDSCDGF…DFFQNQDKFW (93 aa)).

This sequence belongs to the glycosyl hydrolase 85 family. Widely expressed. Expressed at higher level in thymus and spleen.

It localises to the cytoplasm. Its subcellular location is the cytosol. It catalyses the reaction an N(4)-(oligosaccharide-(1-&gt;3)-[oligosaccharide-(1-&gt;6)]-beta-D-Man-(1-&gt;4)-beta-D-GlcNAc-(1-&gt;4)-alpha-D-GlcNAc)-L-asparaginyl-[protein] + H2O = an oligosaccharide-(1-&gt;3)-[oligosaccharide-(1-&gt;6)]-beta-D-Man-(1-&gt;4)-D-GlcNAc + N(4)-(N-acetyl-beta-D-glucosaminyl)-L-asparaginyl-[protein]. Its function is as follows. Endoglycosidase that releases N-glycans from glycoproteins by cleaving the beta-1,4-glycosidic bond in the N,N'-diacetylchitobiose core. Involved in the processing of free oligosaccharides in the cytosol. The sequence is that of Cytosolic endo-beta-N-acetylglucosaminidase (ENGASE) from Homo sapiens (Human).